The sequence spans 201 residues: Small ribosomal subunit protein uS4c (201 aa).

Residues 15–43 form a disordered region; the sequence is LGALPGLTSKRPSPGSDLRNQSRSGKRSQ. In terms of domain architecture, S4 RNA-binding spans 89–150; the sequence is MRLDNILFRL…EQRSRALIQK (62 aa).

The protein belongs to the universal ribosomal protein uS4 family. In terms of assembly, part of the 30S ribosomal subunit. Contacts protein S5. The interaction surface between S4 and S5 is involved in control of translational fidelity.

It is found in the plastid. The protein localises to the chloroplast. In terms of biological role, one of the primary rRNA binding proteins, it binds directly to 16S rRNA where it nucleates assembly of the body of the 30S subunit. Functionally, with S5 and S12 plays an important role in translational accuracy. This is Small ribosomal subunit protein uS4c (rps4) from Ceratophyllum demersum (Rigid hornwort).